The primary structure comprises 49 residues: Astexin-3 (49 aa).

A propeptide spanning residues 1 to 25 (MRTYNRSLPARAGLTDLGKVTTHTK) is cleaved from the precursor. Positions 26 to 34 (GPTPMVGLD) form a cross-link, isoaspartyl glycine isopeptide (Gly-Asp).

This lasso peptide is hydrolyzed to a linear form by the isopeptidase AtxE2, in vitro. The isopeptidase AtxE2 only recognizes the threaded form (but not the unthreaded form).

The protein resides in the cytoplasm. It localises to the secreted. In terms of biological role, shows weak antimicrobial activity against its phylogenetic relative Caulobacter crescentus. Does not show activity against other bacteria tested (E.coli, Vibrio sp, Burkhoderia thailandensis, and Salmonella newport). This chain is Astexin-3, found in Asticcacaulis excentricus (strain ATCC 15261 / DSM 4724 / KCTC 12464 / NCIMB 9791 / VKM B-1370 / CB 48).